The following is a 166-amino-acid chain: Large ribosomal subunit protein uL10 (166 aa).

Belongs to the universal ribosomal protein uL10 family. As to quaternary structure, part of the ribosomal stalk of the 50S ribosomal subunit. The N-terminus interacts with L11 and the large rRNA to form the base of the stalk. The C-terminus forms an elongated spine to which L12 dimers bind in a sequential fashion forming a multimeric L10(L12)X complex.

Forms part of the ribosomal stalk, playing a central role in the interaction of the ribosome with GTP-bound translation factors. This chain is Large ribosomal subunit protein uL10, found in Bacillus velezensis (strain DSM 23117 / BGSC 10A6 / LMG 26770 / FZB42) (Bacillus amyloliquefaciens subsp. plantarum).